The sequence spans 222 residues: Ribosomal RNA large subunit methyltransferase E (222 aa).

Residues G64, W66, D92, D108, and D133 each coordinate S-adenosyl-L-methionine. The Proton acceptor role is filled by K173.

It belongs to the class I-like SAM-binding methyltransferase superfamily. RNA methyltransferase RlmE family.

Its subcellular location is the cytoplasm. It carries out the reaction uridine(2552) in 23S rRNA + S-adenosyl-L-methionine = 2'-O-methyluridine(2552) in 23S rRNA + S-adenosyl-L-homocysteine + H(+). In terms of biological role, specifically methylates the uridine in position 2552 of 23S rRNA at the 2'-O position of the ribose in the fully assembled 50S ribosomal subunit. This chain is Ribosomal RNA large subunit methyltransferase E, found in Variovorax paradoxus (strain S110).